A 207-amino-acid polypeptide reads, in one-letter code: Tetrathionate reductase subunit B (207 aa).

The N-terminal stretch at M1 to M28 is a signal peptide. 3 4Fe-4S ferredoxin-type domains span residues Y34–Y63, G75–E106, and G107–V136. C43, C46, C49, C53, C84, C87, C92, C96, C116, C119, C122, C126, C143, C146, C157, and C161 together coordinate [4Fe-4S] cluster.

Probably composed of three subunits: TtrA, TtrB and TtrC.

It is found in the cell membrane. Functionally, part of a membrane-bound tetrathionate reductase that catalyzes the reduction of tetrathionate to thiosulfate. TtrB is probably involved in transfer of electrons from TtrC to TtrA. The protein is Tetrathionate reductase subunit B (ttrB) of Archaeoglobus fulgidus (strain ATCC 49558 / DSM 4304 / JCM 9628 / NBRC 100126 / VC-16).